Reading from the N-terminus, the 1040-residue chain is Eukaryotic translation initiation factor 3 subunit A (1040 aa).

Residues Leu-92–Ala-121 adopt a coiled-coil conformation. Positions Met-339–Phe-523 constitute a PCI domain. The stretch at Arg-608–Ala-906 forms a coiled coil. Composition is skewed to basic and acidic residues over residues Ala-617–Arg-632 and Glu-795–Arg-901. Disordered stretches follow at residues Ala-617–Gln-641 and Glu-795–Gln-1040. Composition is skewed to low complexity over residues Leu-908–Pro-917, Lys-945–Ala-955, Ser-978–Pro-993, and Ser-1004–Ser-1018.

Belongs to the eIF-3 subunit A family. In terms of assembly, component of the eukaryotic translation initiation factor 3 (eIF-3) complex.

The protein localises to the cytoplasm. In terms of biological role, RNA-binding component of the eukaryotic translation initiation factor 3 (eIF-3) complex, which is involved in protein synthesis of a specialized repertoire of mRNAs and, together with other initiation factors, stimulates binding of mRNA and methionyl-tRNAi to the 40S ribosome. The eIF-3 complex specifically targets and initiates translation of a subset of mRNAs involved in cell proliferation. The protein is Eukaryotic translation initiation factor 3 subunit A (tif32) of Aspergillus terreus (strain NIH 2624 / FGSC A1156).